A 323-amino-acid chain; its full sequence is 8-oxo-dGDP phosphatase NUDT18 (323 aa).

One can recognise a Nudix hydrolase domain in the interval 37–167; sequence RLRKNVCYVV…DILHLVELAA (131 aa). Leu-58 serves as a coordination point for Mg(2+). The Nudix box motif lies at 76-97; that stretch reads GRMEPGETIVEALQREVKEEAG.

This sequence belongs to the Nudix hydrolase family. Mn(2+) is required as a cofactor. Mg(2+) serves as cofactor.

The catalysed reaction is 8-oxo-dGDP + H2O = 8-oxo-dGMP + phosphate + H(+). It catalyses the reaction 8-oxo-dADP + H2O = 8-oxo-dAMP + phosphate + H(+). The enzyme catalyses 2-oxo-dADP + H2O = 2-oxo-dAMP + phosphate + H(+). It carries out the reaction 8-oxo-GDP + H2O = 8-oxo-GMP + phosphate + H(+). Mediates the hydrolysis of oxidized nucleoside diphosphate derivatives. Hydrolyzes 8-oxo-7,8-dihydroguanine (8-oxo-Gua)-containing deoxyribo- and ribonucleoside diphosphates to the monophosphates. Hydrolyzes 8-oxo-dGDP and 8-oxo-GDP with the same efficiencies. Also hydrolyzes 8-OH-dADP and 2-OH-dADP. Exhibited no or minimal hydrolysis activity against 8-oxo-dGTP, 8-oxo-GTP, dGTP, GTP, dGDP and GDP. Probably removes oxidized guanine nucleotides from both the DNA and RNA precursor pools. The polypeptide is 8-oxo-dGDP phosphatase NUDT18 (Homo sapiens (Human)).